The sequence spans 259 residues: Early E4 30 kDa protein (259 aa).

It belongs to the adenoviridae E4 30 to 34 kDa protein family. In terms of assembly, interacts with E1B-55k.

Its subcellular location is the host nucleus. It localises to the host cytoplasm. Functionally, plays a major role to prevent cellular inhibition of viral genome replication by nuclear bodies. Assembles an SCF-like E3 ubiquitin ligase complex based on the cellular proteins ELOB, ELOC, CUL5 and RBX1, in cooperation with viral E1B-55K. This viral RING-type ligase ubiquitinates cellular substrates prior to proteasomal degradation: p53/TP53, LIG4, MRE11-RAD50-NBS1 (MRN) complex, ITGA3, DAXX and BLM. This chain is Early E4 30 kDa protein, found in Canine adenovirus serotype 2 (strain Toronto A 26-61) (CAdV-2).